Consider the following 331-residue polypeptide: MLKLIQNNREITALIAILCLFGLLSVIDHQYFSLQTVTLVFSSAQILILLAIGATLVMLTRNIDVSVGSIAGLCAVIMGMSLNAGFNLPVSCLLTLLLGMCAGFINGALVTWLKIPAIVTTLGTLGLYRGLMLLLTDGKWIEXLPDELKRLSAPLWLNISPIGWLLMILILAMAWILAKTTFGRNFYATGDNLQGARQLGVRTDSIQIIAFSVNGIMAALAGIVFASQIGFIPNQTGSGLEMRAIAACVLGGISLLGGTGTVIGAILGAFFLTQINSGLVLLKLPAWWNDFIAGFVLLAVLIFDGRLRCAIEKISANKNMPVSSKMTKVIR.

The next 9 helical transmembrane spans lie at 14 to 34 (LIAI…YFSL), 39 to 59 (LVFS…LVML), 70 to 90 (IAGL…NLPV), 93 to 113 (LLTL…VTWL), 115 to 135 (IPAI…MLLL), 157 to 177 (LNIS…AWIL), 206 to 226 (IQII…IVFA), 252 to 272 (GISL…AFFL), and 284 to 304 (LPAW…LIFD).

It belongs to the binding-protein-dependent transport system permease family. AraH/RbsC subfamily. The complex is composed of two ATP-binding proteins (LsrA), two transmembrane proteins (LsrC and LsrD) and a solute-binding protein (LsrB).

It localises to the cell inner membrane. In terms of biological role, part of the ABC transporter complex LsrABCD involved in autoinducer 2 (AI-2) import. Probably responsible for the translocation of the substrate across the membrane. This is Autoinducer 2 import system permease protein LsrC (lsrC) from Photorhabdus luminescens (Xenorhabdus luminescens).